The primary structure comprises 322 residues: UDP-N-acetylenolpyruvoylglucosamine reductase (322 aa).

The 167-residue stretch at 36 to 202 (RAGGPAQVLF…TSVLFEGVPG (167 aa)) folds into the FAD-binding PCMH-type domain. The active site involves R182. Catalysis depends on S231, which acts as the Proton donor. Residue E301 is part of the active site.

The protein belongs to the MurB family. The cofactor is FAD.

It localises to the cytoplasm. It catalyses the reaction UDP-N-acetyl-alpha-D-muramate + NADP(+) = UDP-N-acetyl-3-O-(1-carboxyvinyl)-alpha-D-glucosamine + NADPH + H(+). Its pathway is cell wall biogenesis; peptidoglycan biosynthesis. In terms of biological role, cell wall formation. The sequence is that of UDP-N-acetylenolpyruvoylglucosamine reductase from Brucella melitensis biotype 2 (strain ATCC 23457).